The primary structure comprises 289 residues: Glycine--tRNA ligase alpha subunit (289 aa).

The protein belongs to the class-II aminoacyl-tRNA synthetase family. As to quaternary structure, tetramer of two alpha and two beta subunits.

It localises to the cytoplasm. It carries out the reaction tRNA(Gly) + glycine + ATP = glycyl-tRNA(Gly) + AMP + diphosphate. This is Glycine--tRNA ligase alpha subunit from Prochlorococcus marinus subsp. pastoris (strain CCMP1986 / NIES-2087 / MED4).